The primary structure comprises 256 residues: D-aminoacyl-tRNA deacylase (256 aa).

Belongs to the DtdA deacylase family. Monomer. Zn(2+) serves as cofactor.

The catalysed reaction is a D-aminoacyl-tRNA + H2O = a tRNA + a D-alpha-amino acid + H(+). The enzyme catalyses glycyl-tRNA(Ala) + H2O = tRNA(Ala) + glycine + H(+). In terms of biological role, D-aminoacyl-tRNA deacylase with broad substrate specificity. By recycling D-aminoacyl-tRNA to D-amino acids and free tRNA molecules, this enzyme counteracts the toxicity associated with the formation of D-aminoacyl-tRNA entities in vivo. This is D-aminoacyl-tRNA deacylase from Thermoplasma acidophilum (strain ATCC 25905 / DSM 1728 / JCM 9062 / NBRC 15155 / AMRC-C165).